A 65-amino-acid polypeptide reads, in one-letter code: DNA gyrase inhibitor YacG (65 aa).

Cysteine 10, cysteine 13, cysteine 29, and cysteine 33 together coordinate Zn(2+). A disordered region spans residues 45–65 (EKAIPGAPDMSDSDGWSEDQY). Acidic residues predominate over residues 55 to 65 (SDSDGWSEDQY).

Belongs to the DNA gyrase inhibitor YacG family. As to quaternary structure, interacts with GyrB. Requires Zn(2+) as cofactor.

In terms of biological role, inhibits all the catalytic activities of DNA gyrase by preventing its interaction with DNA. Acts by binding directly to the C-terminal domain of GyrB, which probably disrupts DNA binding by the gyrase. This chain is DNA gyrase inhibitor YacG, found in Vibrio cholerae serotype O1 (strain ATCC 39315 / El Tor Inaba N16961).